Here is a 976-residue protein sequence, read N- to C-terminus: Vacuolar membrane protease (976 aa).

At 1–15 (MKLKSVFRSVLKYRK) the chain is on the cytoplasmic side. A helical transmembrane segment spans residues 16 to 36 (TNLSLLLLITYSIITLLYIFD). Residues 37 to 359 (HERYKLNLPK…KFFVISAKTL (323 aa)) are Vacuolar-facing. Residues Asn96 and Asn121 are each glycosylated (N-linked (GlcNAc...) asparagine). Residues His156 and Asp168 each coordinate Zn(2+). Residue Asn189 is glycosylated (N-linked (GlcNAc...) asparagine). Glu200 serves as the catalytic Proton acceptor. Glu201 contacts Zn(2+). Asn217 carries N-linked (GlcNAc...) asparagine glycosylation. Residues Glu226 and His300 each contribute to the Zn(2+) site. Residues 360-380 (FYWNCIFLLVSPVVAIGLYLI) form a helical membrane-spanning segment. Topologically, residues 381–392 (SRDRMTWKSYSW) are cytoplasmic. The helical transmembrane segment at 393-412 (LSWTRFPLSLAAGIIVQKLF) threads the bilayer. Over 413–428 (SNDIIRSNPLTFSRNY) the chain is Vacuolar. Residues 429–449 (FWPISAFFTQVIFTSYVLINC) form a helical membrane-spanning segment. Residues 450–461 (SNFFFPCADMKS) are Cytoplasmic-facing. Residues 462–482 (LSIIELFIILWTILLFTSKLL) form a helical membrane-spanning segment. Over 483–496 (YSSDYRYTGLYPLS) the chain is Vacuolar. A helical transmembrane segment spans residues 497–517 (IFFLLSTIAAILRLLALALGM). Topologically, residues 518–627 (RTRKRLGREC…NSLKLEYTDY (110 aa)) are cytoplasmic. The interval 528–610 (RDHHSNYSSH…PLLKGSNSME (83 aa)) is disordered. A compositionally biased stretch (polar residues) spans 549-558 (NLEQPQDQLT). The span at 559-570 (SSQDDQASIQDD) shows a compositional bias: low complexity. Residues 582-601 (NVDEDHGMDSSSQQHDERVP) show a composition bias toward basic and acidic residues. A helical transmembrane segment spans residues 628–648 (AWIIQFLLIVPIPSFILFNSV). Residues 649-668 (DVIMDALNHTVQEGSKATFD) are Vacuolar-facing. The N-linked (GlcNAc...) asparagine glycan is linked to Asn656. A helical membrane pass occupies residues 669 to 689 (VLRFGMVGSILIALPILPFFY). The Cytoplasmic segment spans residues 690–692 (KVN). A helical membrane pass occupies residues 693-713 (YITISLTALLFLISASKTLLV). Residues 714–976 (HPFTNSNPLK…LVIVKDAIIL (263 aa)) are Vacuolar-facing. 5 N-linked (GlcNAc...) asparagine glycosylation sites follow: Asn768, Asn796, Asn811, Asn866, and Asn937.

The protein belongs to the peptidase M28 family. Zn(2+) serves as cofactor. In terms of processing, N-glycosylated.

Its subcellular location is the vacuole membrane. In terms of biological role, may be involved in vacuolar sorting and osmoregulation. The polypeptide is Vacuolar membrane protease (Saccharomyces cerevisiae (strain ATCC 204508 / S288c) (Baker's yeast)).